Consider the following 197-residue polypeptide: Peptide deformylase (197 aa).

Cys-106 and His-148 together coordinate Fe cation. Glu-149 is an active-site residue. His-152 lines the Fe cation pocket.

This sequence belongs to the polypeptide deformylase family. The cofactor is Fe(2+).

The enzyme catalyses N-terminal N-formyl-L-methionyl-[peptide] + H2O = N-terminal L-methionyl-[peptide] + formate. Functionally, removes the formyl group from the N-terminal Met of newly synthesized proteins. Requires at least a dipeptide for an efficient rate of reaction. N-terminal L-methionine is a prerequisite for activity but the enzyme has broad specificity at other positions. This chain is Peptide deformylase, found in Mycobacterium tuberculosis (strain ATCC 25177 / H37Ra).